A 319-amino-acid polypeptide reads, in one-letter code: Cobalamin biosynthesis protein CbiB (319 aa).

5 consecutive transmembrane segments (helical) span residues 56 to 76 (VMWV…LALA), 82 to 102 (WFGW…RSLA), 153 to 173 (VDGI…LAMA), 204 to 224 (VANY…AGLC), and 296 to 316 (LMWV…CGLS).

The protein belongs to the CobD/CbiB family.

It localises to the cell membrane. It functions in the pathway cofactor biosynthesis; adenosylcobalamin biosynthesis. Converts cobyric acid to cobinamide by the addition of aminopropanol on the F carboxylic group. However, the true cosubstrate could be (R)-1-amino-2-propanol O-2-phosphate, leading to cobinamide phosphate. This is Cobalamin biosynthesis protein CbiB from Salmonella choleraesuis (strain SC-B67).